Reading from the N-terminus, the 156-residue chain is 3-dehydroquinate dehydratase (156 aa).

Catalysis depends on Tyr22, which acts as the Proton acceptor. Positions 73, 79, and 86 each coordinate substrate. His99 acts as the Proton donor in catalysis. Substrate is bound by residues 100-101 (LS) and Arg110.

The protein belongs to the type-II 3-dehydroquinase family. In terms of assembly, homododecamer.

It catalyses the reaction 3-dehydroquinate = 3-dehydroshikimate + H2O. It functions in the pathway metabolic intermediate biosynthesis; chorismate biosynthesis; chorismate from D-erythrose 4-phosphate and phosphoenolpyruvate: step 3/7. Catalyzes a trans-dehydration via an enolate intermediate. The protein is 3-dehydroquinate dehydratase of Nitratiruptor sp. (strain SB155-2).